Here is a 62-residue protein sequence, read N- to C-terminus: uncharacterized protein (62 aa).

Residues 37 to 57 (FILGVILLGVIIESITLLVVY) traverse the membrane as a helical segment.

The protein localises to the membrane. This is an uncharacterized protein from Dictyostelium discoideum (Social amoeba).